A 316-amino-acid polypeptide reads, in one-letter code: Petrobactin import system permease protein YclN (316 aa).

8 consecutive transmembrane segments (helical) span residues 5-25 (YLFI…VEDL), 49-69 (LISI…MQQI), 94-114 (LLLF…VFAL), 133-153 (IFIP…ATFI), 181-201 (LLYL…KFTL), 224-244 (LIIV…LPFL), 268-288 (VLLG…IIFP), and 290-310 (EISI…FMLL).

The protein belongs to the binding-protein-dependent transport system permease family. FecCD subfamily. As to quaternary structure, the complex is composed of two ATP-binding proteins (YclP), two transmembrane proteins (YclN and YclO) and a solute-binding protein (YclQ).

The protein resides in the cell membrane. Functionally, part of the ABC transporter complex YclNOPQ involved in uptake of ferric-petrobactin. Petrobactin is a photoreactive 3,4-catecholate siderophore produced by many members of the B.cereus group, including B.anthracis. Probably responsible for the translocation of the substrate across the membrane. The chain is Petrobactin import system permease protein YclN (yclN) from Bacillus subtilis (strain 168).